The sequence spans 306 residues: Methylated RNA-binding protein 1 (306 aa).

Residues 155-290 form the YTH domain; that stretch reads SRFFVIKSSS…SIGISIINLF (136 aa). Residues 161-163, Asn207, and Trp231 contribute to the RNA site; that span reads KSS.

Functionally, RNA-binding protein that acts as a post-transcriptional regulator of phosphate metabolism by binding to the 3'-UTR region of PHO4 mRNA, decreasing its stability. Acts by recognizing and binding N6-methyladenosine (m6A)-containing RNAs, a modification present at internal sites of mRNAs and some non-coding RNAs. The protein is Methylated RNA-binding protein 1 of Saccharomyces cerevisiae (strain ATCC 204508 / S288c) (Baker's yeast).